Reading from the N-terminus, the 301-residue chain is uncharacterized protein (301 aa).

Catalysis depends on threonine 47, which acts as the Charge relay system. The Proton donor role is filled by tyrosine 136. The active-site Schiff-base intermediate with substrate is the lysine 165.

Belongs to the DapA family. In terms of assembly, homotetramer.

It localises to the cytoplasm. This is an uncharacterized protein from Thermofilum pendens (strain DSM 2475 / Hrk 5).